Here is a 438-residue protein sequence, read N- to C-terminus: GTPase Der (438 aa).

EngA-type G domains are found at residues 4–169 and 178–353; these read PVVA…PEKG and IDVA…DQNS. GTP-binding positions include 10–17, 57–61, 120–123, 184–191, 231–235, and 296–299; these read GRPNVGKS, DTGGI, NKVD, GKPNVGKS, DTAGL, and NKWD. The KH-like domain maps to 354–438; that stretch reads RRVKTGLLNE…PIRLKFKQKT (85 aa).

Belongs to the TRAFAC class TrmE-Era-EngA-EngB-Septin-like GTPase superfamily. EngA (Der) GTPase family. In terms of assembly, associates with the 50S ribosomal subunit.

In terms of biological role, GTPase that plays an essential role in the late steps of ribosome biogenesis. The sequence is that of GTPase Der from Halothermothrix orenii (strain H 168 / OCM 544 / DSM 9562).